Here is a 272-residue protein sequence, read N- to C-terminus: MNETDMKLVVVGAAGRMGQTLIRIIHETAGVRLHAAIERTGSPFIGRDAGELAGAGPMGVAVTDKPLEAFVEAEGVLDFTAPAATVEFAGLAAQARIVHVVGTTGCSADDEARIRAAARHARVIKSGNMSLGVNLLGVLTEKAARALPAGGWDIEILEMHHKHKVDAPSGTALLLGEAAARGRGIDLADHSVRVRDGHTGARPEGSIGFATLRGGSVIGEHSVVIAGEGEMVTLSHSATDRSIFARGAVAAALWGRSRKPGFYSMLDVLGLD.

Residues Gly12–Met17 and Glu38 contribute to the NAD(+) site. An NADP(+)-binding site is contributed by Arg39. NAD(+)-binding positions include Gly102 to Thr104 and Ser126 to Met129. His160 (proton donor/acceptor) is an active-site residue. His161 is a (S)-2,3,4,5-tetrahydrodipicolinate binding site. The active-site Proton donor is the Lys164. Position 170 to 171 (Gly170 to Thr171) interacts with (S)-2,3,4,5-tetrahydrodipicolinate.

The protein belongs to the DapB family.

The protein localises to the cytoplasm. It catalyses the reaction (S)-2,3,4,5-tetrahydrodipicolinate + NAD(+) + H2O = (2S,4S)-4-hydroxy-2,3,4,5-tetrahydrodipicolinate + NADH + H(+). It carries out the reaction (S)-2,3,4,5-tetrahydrodipicolinate + NADP(+) + H2O = (2S,4S)-4-hydroxy-2,3,4,5-tetrahydrodipicolinate + NADPH + H(+). It participates in amino-acid biosynthesis; L-lysine biosynthesis via DAP pathway; (S)-tetrahydrodipicolinate from L-aspartate: step 4/4. Catalyzes the conversion of 4-hydroxy-tetrahydrodipicolinate (HTPA) to tetrahydrodipicolinate. The polypeptide is 4-hydroxy-tetrahydrodipicolinate reductase (Rhizobium meliloti (strain 1021) (Ensifer meliloti)).